Here is a 2157-residue protein sequence, read N- to C-terminus: Polyketide synthase 2 (2157 aa).

Residues phenylalanine 7–histidine 244 form an N-terminal acylcarrier protein transacylase domain (SAT) region. The region spanning aspartate 374–aspartate 807 is the Ketosynthase family 3 (KS3) domain. Residues cysteine 546, histidine 681, and histidine 723 each act as for beta-ketoacyl synthase activity in the active site. Residues glycine 908–tryptophan 1213 are malonyl-CoA:ACP transacylase (MAT) domain. The For acyl/malonyl transferase activity role is filled by serine 998. The tract at residues threonine 1290 to proline 1605 is product template (PT) domain. The N-terminal hotdog fold stretch occupies residues glutamine 1294–serine 1428. Residues glutamine 1294–asparagine 1600 enclose the PKS/mFAS DH domain. Histidine 1327 serves as the catalytic Proton acceptor; for dehydratase activity. A C-terminal hotdog fold region spans residues threonine 1455 to asparagine 1600. Aspartate 1514 acts as the Proton donor; for dehydratase activity in catalysis. Positions alanine 1626–threonine 1652 are disordered. A compositionally biased stretch (polar residues) spans alanine 1643–threonine 1652. The Carrier 1 domain maps to serine 1649–glutamine 1726. At serine 1686 the chain carries O-(pantetheine 4'-phosphoryl)serine. A disordered region spans residues alanine 1733–threonine 1762. Over residues glutamate 1735–valine 1755 the composition is skewed to polar residues. The 75-residue stretch at aspartate 1765 to glutamate 1839 folds into the Carrier 2 domain. Residue serine 1799 is modified to O-(pantetheine 4'-phosphoryl)serine. The disordered stretch occupies residues alanine 1840–glutamate 1859. Residues alanine 1875–glutamate 2151 are thioesterase (TE) domain. The For thioesterase activity role is filled by serine 1981.

Polyketide synthase; part of the Pks2 gene cluster that mediates the formation of infectious structures (appressoria), enabling these fungi to kill insects faster. The product of the Pks2 gene cluster is different from the one of Pks1 and has still not been identified. The sequence is that of Polyketide synthase 2 from Metarhizium robertsii (strain ARSEF 23 / ATCC MYA-3075) (Metarhizium anisopliae (strain ARSEF 23)).